Reading from the N-terminus, the 292-residue chain is Probable serine/threonine-protein kinase FPV226 (292 aa).

In terms of domain architecture, Protein kinase spans 14 to 292 (WKIDKLIGCG…DLLRQLVNSL (279 aa)). ATP-binding positions include 20-28 (IGCGGFGCV) and K43. The active-site Proton acceptor is D147.

The protein belongs to the protein kinase superfamily. Ser/Thr protein kinase family. Poxviruses subfamily.

The catalysed reaction is L-seryl-[protein] + ATP = O-phospho-L-seryl-[protein] + ADP + H(+). It catalyses the reaction L-threonyl-[protein] + ATP = O-phospho-L-threonyl-[protein] + ADP + H(+). The protein is Probable serine/threonine-protein kinase FPV226 of Vertebrata (FPV).